The chain runs to 287 residues: MQIVDFLIALLPALFWGSVVIINVFVGGGPYNQIRGTTLGTLFIGFSLLATGHAAFDNLTVIIVGLVSGALWAFGQGNQLKSVHLIGVSKTMPISTGMQLVGTTLFSAIFLGEWSTIVQVVMGLIAMILLVVGISLTSLKAKSEGKSDNPEFKKAMGILLLSTIGYVGYVVLGDIFGVSGTDALFFQSIGMAIGGLILSMNHNTSIKSTALNLIPGVIWGIGNLFMFYSQPKVGVATSFSLSQLLVIVSTLGGIFILGEKKDRRQMIGIWSGIIVIVIASIILGNLK.

Helical transmembrane passes span 7-29 (LIAL…VGGG), 34-56 (IRGT…HAAF), 58-75 (NLTV…WAFG), 114-136 (WSTI…GISL), 156-178 (MGIL…IFGV), 183-202 (ALFF…SMNH), 209-228 (TALN…FMFY), 233-255 (VGVA…GGIF), and 267-286 (IGIW…LGNL).

This sequence belongs to the GRP transporter (TC 2.A.7.5) family.

Its subcellular location is the cell membrane. Functionally, involved in the uptake of glucose. The sequence is that of Probable glucose uptake protein GlcU (glcU) from Staphylococcus epidermidis (strain ATCC 35984 / DSM 28319 / BCRC 17069 / CCUG 31568 / BM 3577 / RP62A).